The following is a 1047-amino-acid chain: tRNA wybutosine-synthesizing protein 4 (1047 aa).

Residues arginine 69, glycine 95, aspartate 122, 169-170 (DL), and glutamate 196 each bind S-adenosyl-L-methionine. The 190-residue stretch at 814 to 1003 (GRQYLRSISA…AAGRDVYGNR (190 aa)) folds into the JmjC domain.

This sequence belongs to the methyltransferase superfamily. LCMT family.

It carries out the reaction 7-[(3S)-3-amino-3-carboxypropyl]wyosine(37) in tRNA(Phe) + S-adenosyl-L-methionine = 7-[(3S)-(3-amino-3-methoxycarbonyl)propyl]wyosine(37) in tRNA(Phe) + S-adenosyl-L-homocysteine. The enzyme catalyses 7-[(3S)-(3-amino-3-methoxycarbonyl)propyl]wyosine(37) in tRNA(Phe) + S-adenosyl-L-methionine + CO2 = wybutosine(37) in tRNA(Phe) + S-adenosyl-L-homocysteine + 2 H(+). Its pathway is tRNA modification; wybutosine-tRNA(Phe) biosynthesis. Functionally, probable S-adenosyl-L-methionine-dependent methyltransferase that acts as a component of the wybutosine biosynthesis pathway. Wybutosine is a hyper modified guanosine with a tricyclic base found at the 3'-position adjacent to the anticodon of eukaryotic phenylalanine tRNA. May methylate the carboxyl group of leucine residues to form alpha-leucine ester residues. The polypeptide is tRNA wybutosine-synthesizing protein 4 (ppm2) (Aspergillus fumigatus (strain ATCC MYA-4609 / CBS 101355 / FGSC A1100 / Af293) (Neosartorya fumigata)).